Here is a 136-residue protein sequence, read N- to C-terminus: MLSPKRTRFRKQHRGRMNGKSCRGNHICFGRYALQVLEPAWITARQIEAGRRAMTRYARRGGKIWVRIFPDKPVTIRPTETRMGSGKGSPEYWVAVVKPGRILYEMSGVSETVARAAISIAASKMPIRSQFLRLEI.

The protein belongs to the universal ribosomal protein uL16 family. Part of the 50S ribosomal subunit.

It is found in the plastid. The protein localises to the chloroplast. The chain is Large ribosomal subunit protein uL16c from Saccharum hybrid (Sugarcane).